The primary structure comprises 149 residues: Large ribosomal subunit protein uL11 (149 aa).

It belongs to the universal ribosomal protein uL11 family. In terms of assembly, part of the ribosomal stalk of the 50S ribosomal subunit. Interacts with L10 and the large rRNA to form the base of the stalk. L10 forms an elongated spine to which L12 dimers bind in a sequential fashion forming a multimeric L10(L12)X complex. Post-translationally, one or more lysine residues are methylated.

Forms part of the ribosomal stalk which helps the ribosome interact with GTP-bound translation factors. This Xanthobacter autotrophicus (strain ATCC BAA-1158 / Py2) protein is Large ribosomal subunit protein uL11.